A 261-amino-acid polypeptide reads, in one-letter code: WW domain-binding protein 2 (261 aa).

In terms of domain architecture, GRAM spans 1-84; sequence MALNKNHSEG…YLMKDCEIKQ (84 aa). Residue tyrosine 192 is modified to Phosphotyrosine. Residues 196-200 carry the PPxY motif 1 motif; it reads PPPPY. Residues 196-209 are compositionally biased toward pro residues; the sequence is PPPPYPGPMEPPVS. The interval 196-261 is disordered; the sequence is PPPPYPGPME…YYPPEDKKTQ (66 aa). Low complexity predominate over residues 210-230; that stretch reads GPSAPATPAAEAKAAEAAASA. At tyrosine 231 the chain carries Phosphotyrosine. Positions 245-254 are enriched in pro residues; sequence SQPPPPPYYP. The short motif at 248-252 is the PPxY motif 2 element; sequence PPPPY.

Binds to the WW domain of YAP1, WWP1 and WWP2. Interacts with NEDD4. Interacts with ESR1 and UBE3A. Post-translationally, phosphorylated in repsonse to EGF as well as estrogen and progesterone hormones. Tyr-192 and Tyr-231 are phosphorylated by YES and SRC inducing nuclear translocation. In terms of tissue distribution, expressed in the ear and the eye. Isoform 1 is expressed in brain, inner ear and organ of Corti. Isoform 2 is only detected in brain.

Its subcellular location is the cytoplasm. The protein localises to the nucleus. Functionally, acts as a transcriptional coactivator of estrogen and progesterone receptors (ESR1 and PGR) upon hormone activation. In presence of estrogen, binds to ESR1-responsive promoters. Synergizes with YAP1 to enhance PGR activity. Modulates expression of post-synaptic scaffolding proteins via regulation of ESR1, ESR2 and PGR. This is WW domain-binding protein 2 (Wbp2) from Mus musculus (Mouse).